The chain runs to 601 residues: Elongation factor 4 (601 aa).

The region spanning 6-188 is the tr-type G domain; the sequence is NYIRNFSIVA…AIVTQLPSPR (183 aa). Residues 18-23 and 135-138 each bind GTP; these read DHGKST and NKVD.

Belongs to the TRAFAC class translation factor GTPase superfamily. Classic translation factor GTPase family. LepA subfamily.

It localises to the cell inner membrane. The enzyme catalyses GTP + H2O = GDP + phosphate + H(+). Required for accurate and efficient protein synthesis under certain stress conditions. May act as a fidelity factor of the translation reaction, by catalyzing a one-codon backward translocation of tRNAs on improperly translocated ribosomes. Back-translocation proceeds from a post-translocation (POST) complex to a pre-translocation (PRE) complex, thus giving elongation factor G a second chance to translocate the tRNAs correctly. Binds to ribosomes in a GTP-dependent manner. The protein is Elongation factor 4 of Bartonella henselae (strain ATCC 49882 / DSM 28221 / CCUG 30454 / Houston 1) (Rochalimaea henselae).